A 73-amino-acid polypeptide reads, in one-letter code: Neurotoxin Cex13 (73 aa).

Positions 1–7 (ATGNVWA) are cleaved as a signal peptide. Residues 8–71 (KDGYLVIIKT…TWPLPDKTCG (64 aa)) enclose the LCN-type CS-alpha/beta domain. Disulfide bonds link Cys19-Cys70, Cys23-Cys46, Cys32-Cys51, and Cys36-Cys53. Cys70 carries the post-translational modification Cysteine amide. A propeptide spanning residues 71 to 73 (GTK) is cleaved from the precursor.

Belongs to the long (4 C-C) scorpion toxin superfamily. Sodium channel inhibitor family. Beta subfamily. In terms of tissue distribution, expressed by the venom gland.

Its subcellular location is the secreted. Beta toxins bind voltage-independently at site-4 of sodium channels (Nav) and shift the voltage of activation toward more negative potentials thereby affecting sodium channel activation and promoting spontaneous and repetitive firing. The sequence is that of Neurotoxin Cex13 from Centruroides exilicauda (Bark scorpion).